We begin with the raw amino-acid sequence, 1507 residues long: Protein TIC 214 (1507 aa).

Helical transmembrane passes span isoleucine 4–glycine 24, threonine 53–leucine 73, leucine 81–tyrosine 101, alanine 129–phenylalanine 149, isoleucine 163–leucine 183, and leucine 202–cysteine 222.

This sequence belongs to the TIC214 family. As to quaternary structure, part of the Tic complex.

Its subcellular location is the plastid. It localises to the chloroplast inner membrane. Its function is as follows. Involved in protein precursor import into chloroplasts. May be part of an intermediate translocation complex acting as a protein-conducting channel at the inner envelope. The polypeptide is Protein TIC 214 (Staurastrum punctulatum (Green alga)).